The primary structure comprises 215 residues: Probable transaldolase (215 aa).

Residue K83 is the Schiff-base intermediate with substrate of the active site.

This sequence belongs to the transaldolase family. Type 3B subfamily.

The protein localises to the cytoplasm. The catalysed reaction is D-sedoheptulose 7-phosphate + D-glyceraldehyde 3-phosphate = D-erythrose 4-phosphate + beta-D-fructose 6-phosphate. It functions in the pathway carbohydrate degradation; pentose phosphate pathway; D-glyceraldehyde 3-phosphate and beta-D-fructose 6-phosphate from D-ribose 5-phosphate and D-xylulose 5-phosphate (non-oxidative stage): step 2/3. Functionally, transaldolase is important for the balance of metabolites in the pentose-phosphate pathway. The chain is Probable transaldolase from Methanococcus maripaludis (strain C5 / ATCC BAA-1333).